Here is a 308-residue protein sequence, read N- to C-terminus: HPr kinase/phosphorylase (308 aa).

Catalysis depends on residues His136 and Lys157. An ATP-binding site is contributed by Gly151–Ser158. Ser158 contacts Mg(2+). Asp175 acts as the Proton acceptor; for phosphorylation activity. Proton donor; for dephosphorylation activity in catalysis. An important for the catalytic mechanism of both phosphorylation and dephosphorylation region spans residues Ile198 to Asp207. Residue Glu199 coordinates Mg(2+). The active site involves Arg240. Positions Pro261–Arg266 are important for the catalytic mechanism of dephosphorylation.

The protein belongs to the HPrK/P family. Homohexamer. The cofactor is Mg(2+).

It carries out the reaction [HPr protein]-L-serine + ATP = [HPr protein]-O-phospho-L-serine + ADP + H(+). The enzyme catalyses [HPr protein]-O-phospho-L-serine + phosphate + H(+) = [HPr protein]-L-serine + diphosphate. Functionally, catalyzes the ATP- as well as the pyrophosphate-dependent phosphorylation of a specific serine residue in HPr, a phosphocarrier protein of the phosphoenolpyruvate-dependent sugar phosphotransferase system (PTS). HprK/P also catalyzes the pyrophosphate-producing, inorganic phosphate-dependent dephosphorylation (phosphorolysis) of seryl-phosphorylated HPr (P-Ser-HPr). The two antagonistic activities of HprK/P are regulated by several intracellular metabolites, which change their concentration in response to the absence or presence of rapidly metabolisable carbon sources (glucose, fructose, etc.) in the growth medium. Therefore, by controlling the phosphorylation state of HPr, HPrK/P is a sensor enzyme that plays a major role in the regulation of carbon metabolism and sugar transport: it mediates carbon catabolite repression (CCR), and regulates PTS-catalyzed carbohydrate uptake and inducer exclusion. This is HPr kinase/phosphorylase from Clostridium kluyveri (strain NBRC 12016).